The primary structure comprises 416 residues: UDP-N-acetylmuramoylalanine--D-glutamate ligase (416 aa).

104-110 (GSNGKST) contributes to the ATP binding site.

The protein belongs to the MurCDEF family.

It localises to the cytoplasm. The catalysed reaction is UDP-N-acetyl-alpha-D-muramoyl-L-alanine + D-glutamate + ATP = UDP-N-acetyl-alpha-D-muramoyl-L-alanyl-D-glutamate + ADP + phosphate + H(+). Its pathway is cell wall biogenesis; peptidoglycan biosynthesis. Cell wall formation. Catalyzes the addition of glutamate to the nucleotide precursor UDP-N-acetylmuramoyl-L-alanine (UMA). The chain is UDP-N-acetylmuramoylalanine--D-glutamate ligase from Francisella tularensis subsp. mediasiatica (strain FSC147).